Reading from the N-terminus, the 318-residue chain is NAC domain-containing protein 68 (318 aa).

Residues 21–175 enclose the NAC domain; sequence LPPGFRFHPT…EWVLCRLYNK (155 aa).

In terms of tissue distribution, expressed in stems, leaf blades and callus. Weakly expressed in developing flowers.

Its subcellular location is the nucleus. Functionally, probable transcription factor involved in stress response. The sequence is that of NAC domain-containing protein 68 from Oryza sativa subsp. japonica (Rice).